Here is a 468-residue protein sequence, read N- to C-terminus: Glutamate--tRNA ligase 2 (468 aa).

A 'HIGH' region motif is present at residues 13-23; sequence PSPTGYLHIGG. The 'KMSKS' region signature appears at 241 to 245; that stretch reads KLSKR. Lys-244 contacts ATP.

This sequence belongs to the class-I aminoacyl-tRNA synthetase family. Glutamate--tRNA ligase type 1 subfamily. Monomer.

The protein resides in the cytoplasm. The catalysed reaction is tRNA(Glu) + L-glutamate + ATP = L-glutamyl-tRNA(Glu) + AMP + diphosphate. Its function is as follows. Catalyzes the attachment of glutamate to tRNA(Glu) in a two-step reaction: glutamate is first activated by ATP to form Glu-AMP and then transferred to the acceptor end of tRNA(Glu). The sequence is that of Glutamate--tRNA ligase 2 from Paracoccus denitrificans (strain Pd 1222).